A 151-amino-acid chain; its full sequence is Protein SprT-like (151 aa).

The SprT-like domain occupies Leu-6–Lys-147. His-67 serves as a coordination point for Zn(2+). Residue Glu-68 is part of the active site. Position 71 (His-71) interacts with Zn(2+).

The protein belongs to the SprT family. It depends on Zn(2+) as a cofactor.

It is found in the cytoplasm. This is Protein SprT-like from Staphylococcus aureus (strain Mu3 / ATCC 700698).